A 403-amino-acid polypeptide reads, in one-letter code: Phosphopentomutase (403 aa).

6 residues coordinate Mn(2+): Asp13, Asp298, His303, Asp339, His340, and His351.

The protein belongs to the phosphopentomutase family. Mn(2+) is required as a cofactor.

It localises to the cytoplasm. It catalyses the reaction 2-deoxy-alpha-D-ribose 1-phosphate = 2-deoxy-D-ribose 5-phosphate. The enzyme catalyses alpha-D-ribose 1-phosphate = D-ribose 5-phosphate. The protein operates within carbohydrate degradation; 2-deoxy-D-ribose 1-phosphate degradation; D-glyceraldehyde 3-phosphate and acetaldehyde from 2-deoxy-alpha-D-ribose 1-phosphate: step 1/2. In terms of biological role, isomerase that catalyzes the conversion of deoxy-ribose 1-phosphate (dRib-1-P) and ribose 1-phosphate (Rib-1-P) to deoxy-ribose 5-phosphate (dRib-5-P) and ribose 5-phosphate (Rib-5-P), respectively. This is Phosphopentomutase from Streptococcus uberis (strain ATCC BAA-854 / 0140J).